The chain runs to 460 residues: Bifunctional protein GlmU (460 aa).

Positions 1–229 (MTNYAIILAA…FNESLGVNDR (229 aa)) are pyrophosphorylase. UDP-N-acetyl-alpha-D-glucosamine contacts are provided by residues 8-11 (LAAG), Lys22, Gln72, and 77-78 (GT). Asp102 contributes to the Mg(2+) binding site. Residues Gly139, Glu154, Asn169, and Asn227 each coordinate UDP-N-acetyl-alpha-D-glucosamine. Position 227 (Asn227) interacts with Mg(2+). Residues 230–250 (VALATAETVMRQRITQKHMVN) form a linker region. The segment at 251 to 460 (GVTFQNPETV…RLAHHPSRSK (210 aa)) is N-acetyltransferase. 2 residues coordinate UDP-N-acetyl-alpha-D-glucosamine: Arg332 and Lys350. Residue His362 is the Proton acceptor of the active site. UDP-N-acetyl-alpha-D-glucosamine-binding residues include Tyr365 and Asn376. Residues Ala379, 385–386 (NY), Ser404, Ala422, and Arg439 each bind acetyl-CoA.

It in the N-terminal section; belongs to the N-acetylglucosamine-1-phosphate uridyltransferase family. In the C-terminal section; belongs to the transferase hexapeptide repeat family. As to quaternary structure, homotrimer. It depends on Mg(2+) as a cofactor.

It localises to the cytoplasm. It carries out the reaction alpha-D-glucosamine 1-phosphate + acetyl-CoA = N-acetyl-alpha-D-glucosamine 1-phosphate + CoA + H(+). The catalysed reaction is N-acetyl-alpha-D-glucosamine 1-phosphate + UTP + H(+) = UDP-N-acetyl-alpha-D-glucosamine + diphosphate. The protein operates within nucleotide-sugar biosynthesis; UDP-N-acetyl-alpha-D-glucosamine biosynthesis; N-acetyl-alpha-D-glucosamine 1-phosphate from alpha-D-glucosamine 6-phosphate (route II): step 2/2. Its pathway is nucleotide-sugar biosynthesis; UDP-N-acetyl-alpha-D-glucosamine biosynthesis; UDP-N-acetyl-alpha-D-glucosamine from N-acetyl-alpha-D-glucosamine 1-phosphate: step 1/1. It functions in the pathway bacterial outer membrane biogenesis; LPS lipid A biosynthesis. Catalyzes the last two sequential reactions in the de novo biosynthetic pathway for UDP-N-acetylglucosamine (UDP-GlcNAc). The C-terminal domain catalyzes the transfer of acetyl group from acetyl coenzyme A to glucosamine-1-phosphate (GlcN-1-P) to produce N-acetylglucosamine-1-phosphate (GlcNAc-1-P), which is converted into UDP-GlcNAc by the transfer of uridine 5-monophosphate (from uridine 5-triphosphate), a reaction catalyzed by the N-terminal domain. The protein is Bifunctional protein GlmU of Streptococcus pyogenes serotype M12 (strain MGAS9429).